Reading from the N-terminus, the 85-residue chain is Augerpeptide-s6a (85 aa).

The signal sequence occupies residues 1 to 20; it reads MTLTMSTVVFFSLILLTLGL. Positions 21–43 are excised as a propeptide; sequence QPKDKDEGVMGRSRLGKRGLLMR. Cystine bridges form between Cys54–Cys65, Cys58–Cys70, and Cys64–Cys81.

As to expression, expressed by the venom duct.

The protein localises to the secreted. This Terebra subulata (Chocolate spotted auger) protein is Augerpeptide-s6a.